The sequence spans 545 residues: Protein disulfide isomerase-like 1-3 (545 aa).

Pro residues predominate over residues 1-16; that stretch reads MWPRAPATPPPPPWPS. The tract at residues 1–24 is disordered; the sequence is MWPRAPATPPPPPWPSKPSAASRS. Positions 55–189 constitute a Thioredoxin 1 domain; that stretch reads ASSTAFAAAF…IVAYLKRQAG (135 aa). N-linked (GlcNAc...) asparagine glycosylation is present at asparagine 87. Active-site nucleophile residues include cysteine 107 and cysteine 110. Residues cysteine 107 and cysteine 110 are joined by a disulfide bond. Asparagine 349 is a glycosylation site (N-linked (GlcNAc...) asparagine). Positions 403 to 545 constitute a Thioredoxin 2 domain; it reads FTEGTLAPHV…TTTESVKDEL (143 aa). Residues cysteine 453 and cysteine 456 each act as nucleophile in the active site. Cysteine 453 and cysteine 456 form a disulfide bridge. Positions 542–545 match the Prevents secretion from ER motif; it reads KDEL.

It belongs to the protein disulfide isomerase family.

It localises to the endoplasmic reticulum lumen. The catalysed reaction is Catalyzes the rearrangement of -S-S- bonds in proteins.. Its function is as follows. Acts as a protein-folding catalyst that interacts with nascent polypeptides to catalyze the formation, isomerization, and reduction or oxidation of disulfide bonds. May play a role in storage protein biogenesis. In Oryza sativa subsp. japonica (Rice), this protein is Protein disulfide isomerase-like 1-3 (PDIL1-3).